Here is a 261-residue protein sequence, read N- to C-terminus: SLA class II histocompatibility antigen, DQ haplotype C beta chain (261 aa).

The first 31 residues, 1-31 (MSGMVALRLPRGLWTAALTVMLVVLGAPVAE), serve as a signal peptide directing secretion. The beta-1 stretch occupies residues 32 to 126 (GRDSPQDFVF…IEEGTTLQRR (95 aa)). The Extracellular segment spans residues 32–230 (GRDSPQDFVF…RAQSESAQSK (199 aa)). 2 disulfides stabilise this stretch: Cys-47/Cys-111 and Cys-149/Cys-205. N-linked (GlcNAc...) asparagine glycosylation is present at Asn-51. Positions 127 to 220 (VQPTVTISPS…SLQNPILVEW (94 aa)) are beta-2. Residues 129–233 (PTVTISPSKA…SESAQSKMLS (105 aa)) form the Ig-like C1-type domain. Positions 221-230 (RAQSESAQSK) are connecting peptide. Residues 231 to 251 (MLSGVGGFVLGLIFLGLGLFI) form a helical membrane-spanning segment. Over 252-261 (RHRSQKGLVR) the chain is Cytoplasmic.

Belongs to the MHC class II family.

Its subcellular location is the membrane. The chain is SLA class II histocompatibility antigen, DQ haplotype C beta chain from Sus scrofa (Pig).